Consider the following 163-residue polypeptide: Olfactory marker protein (163 aa).

An N-acetylalanine modification is found at Ala2.

The protein belongs to the olfactory marker protein family. As to quaternary structure, interacts with BEX1 and BEX2. Uniquely associated with mature olfactory receptor neurons.

Its subcellular location is the cytoplasm. Functionally, may act as a modulator of the olfactory signal-transduction cascade. The polypeptide is Olfactory marker protein (Omp) (Mus musculus (Mouse)).